Consider the following 663-residue polypeptide: Transmembrane 9 superfamily member 2 (663 aa).

Residues 1 to 28 (MSSRPPASLPARGPRLLLLSLLLLGTVP) form the signal peptide. Residues 29 to 300 (GPRPGSAFYL…LESMPHTHIQ (272 aa)) lie on the Lumenal side of the membrane. Residues 301–321 (WFSIMNSLVIVLFLSGMVAMI) form a helical membrane-spanning segment. Over 322 to 374 (MLRTLHKDIARYNQMDSTEDAQEEFGWKLVHGDIFRPPRKGMLLSVFLGSGTQ) the chain is Cytoplasmic. The chain crosses the membrane as a helical span at residues 375-395 (ILIMTFVTLFFACLGFLSPAN). Residues 396-398 (RGA) lie on the Lumenal side of the membrane. A helical transmembrane segment spans residues 399-419 (LMTCAVVLWVLLGTPAGYVAA). At 420 to 437 (RFYKSFGGEKWKTNVLLT) the chain is on the cytoplasmic side. Residues 438 to 458 (SFLCPGIVFADFFIMNLILWG) form a helical membrane-spanning segment. Residues 459 to 466 (EGSSAAIP) lie on the Lumenal side of the membrane. The helical transmembrane segment at 467-487 (FGTLVAILALWFCISVPLTFI) threads the bilayer. The Cytoplasmic segment spans residues 488-522 (GAYFGFKKNAIEHPVRTNQIPRQIPEQSFYTKPLP). A helical transmembrane segment spans residues 523–543 (GIIMGGILPFGCIFIQLFFIL). At 544 to 554 (NSIWSHQMYYM) the chain is on the lumenal side. A helical transmembrane segment spans residues 555–575 (FGFLFLVFIILVITCSEATIL). The Cytoplasmic segment spans residues 576 to 591 (LCYFHLCAEDYHWQWR). The helical transmembrane segment at 592-612 (SFLTSGFTAVYFLVYAIHYFF) threads the bilayer. Over 613–631 (SKLQITGTASTILYFGYTM) the chain is Lumenal. The helical transmembrane segment at 632 to 652 (IMVLIFFLFTGTIGFFACFWF) threads the bilayer. Residues 653-663 (VTKIYSVVKVD) are Cytoplasmic-facing.

Belongs to the nonaspanin (TM9SF) (TC 9.A.2) family.

It localises to the endosome membrane. The protein resides in the golgi outpost. Its subcellular location is the cytoplasm. It is found in the cytoskeleton. The protein localises to the microtubule organizing center. Its function is as follows. In the intracellular compartments, may function as a channel or small molecule transporter. In Rattus norvegicus (Rat), this protein is Transmembrane 9 superfamily member 2 (Tm9sf2).